A 93-amino-acid polypeptide reads, in one-letter code: Small ribosomal subunit protein uS19 (93 aa).

This sequence belongs to the universal ribosomal protein uS19 family.

Its function is as follows. Protein S19 forms a complex with S13 that binds strongly to the 16S ribosomal RNA. The sequence is that of Small ribosomal subunit protein uS19 from Agathobacter rectalis (strain ATCC 33656 / DSM 3377 / JCM 17463 / KCTC 5835 / VPI 0990) (Eubacterium rectale).